The chain runs to 64 residues: Large ribosomal subunit protein eL37 (64 aa).

The Zn(2+) site is built by cysteine 20, cysteine 23, cysteine 35, and cysteine 38. The segment at 20–38 (CRRCGRRAFHVRKKVCAAC) adopts a C4-type zinc-finger fold.

Belongs to the eukaryotic ribosomal protein eL37 family. It depends on Zn(2+) as a cofactor.

In terms of biological role, binds to the 23S rRNA. This chain is Large ribosomal subunit protein eL37, found in Methanococcus maripaludis (strain C6 / ATCC BAA-1332).